A 328-amino-acid polypeptide reads, in one-letter code: Phosphate acyltransferase (328 aa).

Belongs to the PlsX family. In terms of assembly, homodimer. Probably interacts with PlsY.

Its subcellular location is the cytoplasm. It catalyses the reaction a fatty acyl-[ACP] + phosphate = an acyl phosphate + holo-[ACP]. Its pathway is lipid metabolism; phospholipid metabolism. Catalyzes the reversible formation of acyl-phosphate (acyl-PO(4)) from acyl-[acyl-carrier-protein] (acyl-ACP). This enzyme utilizes acyl-ACP as fatty acyl donor, but not acyl-CoA. The sequence is that of Phosphate acyltransferase from Pseudothermotoga lettingae (strain ATCC BAA-301 / DSM 14385 / NBRC 107922 / TMO) (Thermotoga lettingae).